The following is a 179-amino-acid chain: Bifunctional protein PyrR (179 aa).

Substrate contacts are provided by residues 39–40 (RR), 101–109 (DDVLFTGRT), Arg134, and Val158. A PRPP-binding motif is present at residues 97–109 (VILIDDVLFTGRT).

The protein belongs to the purine/pyrimidine phosphoribosyltransferase family. PyrR subfamily.

It carries out the reaction UMP + diphosphate = 5-phospho-alpha-D-ribose 1-diphosphate + uracil. Regulates the transcription of the pyrimidine nucleotide (pyr) operon in response to exogenous pyrimidines. Functionally, also displays a weak uracil phosphoribosyltransferase activity which is not physiologically significant. The protein is Bifunctional protein PyrR of Haemophilus ducreyi (strain 35000HP / ATCC 700724).